Consider the following 436-residue polypeptide: 3-ketoacyl-CoA thiolase (436 aa).

Cys-99 (acyl-thioester intermediate) is an active-site residue. Active-site proton acceptor residues include His-392 and Cys-422.

This sequence belongs to the thiolase-like superfamily. Thiolase family. In terms of assembly, heterotetramer of two alpha chains (FadJ) and two beta chains (FadI).

It localises to the cytoplasm. The enzyme catalyses an acyl-CoA + acetyl-CoA = a 3-oxoacyl-CoA + CoA. It participates in lipid metabolism; fatty acid beta-oxidation. Functionally, catalyzes the final step of fatty acid oxidation in which acetyl-CoA is released and the CoA ester of a fatty acid two carbons shorter is formed. The sequence is that of 3-ketoacyl-CoA thiolase from Salmonella paratyphi B (strain ATCC BAA-1250 / SPB7).